We begin with the raw amino-acid sequence, 325 residues long: Metacaspase-9 (325 aa).

Residues histidine 95 and cysteine 147 contribute to the active site. Cysteine 147 carries the S-nitrosocysteine modification. Residue asparagine 177 is glycosylated (N-linked (GlcNAc...) asparagine).

Belongs to the peptidase C14B family. In terms of processing, the two subunits are derived from the precursor sequence by an autocatalytic mechanism. Post-translationally, S-nitrosylation at Cys-147 suppresses both autoprocessing and proteolytic activity of the full-length protein, but does not affect the activity of the mature processed form. In terms of tissue distribution, expressed in root tips, cauline leaves, flowers and siliques.

It is found in the secreted. The protein resides in the extracellular space. Its subcellular location is the apoplast. With respect to regulation, inhibited by serpin ZX and nitric oxide through cysteine nitrosylation. Cysteine protease that cleaves specifically after arginine or lysine residues. Does not cleave caspase-specific substrates. Required for proteolytic processing of GRI. This chain is Metacaspase-9 (AMC9), found in Arabidopsis thaliana (Mouse-ear cress).